A 418-amino-acid polypeptide reads, in one-letter code: Protein MAEA homolog (418 aa).

The 33-residue stretch at 141–173 folds into the LisH domain; the sequence is NNTKLKRILVDYMLRMSYFETATKLSESSNIMD. The CTLH domain maps to 179-236; it reads IFREAKKVIDALKNREVASALTWCADNKTRLKKSKSKFEFQLRLQEFIELVRVDTAES. The segment at 330-403 adopts an RING-Gid-type zinc-finger fold; it reads CTKEDPLSQE…NGGKITCPRT (74 aa).

As to quaternary structure, interacts with RANBPM.

It is found in the cytoplasm. This chain is Protein MAEA homolog, found in Arabidopsis thaliana (Mouse-ear cress).